The following is a 761-amino-acid chain: Xaa-Pro dipeptidyl-peptidase (761 aa).

Catalysis depends on charge relay system residues Ser-347, Asp-467, and His-497.

The protein belongs to the peptidase S15 family. As to quaternary structure, homodimer.

It is found in the cytoplasm. It catalyses the reaction Hydrolyzes Xaa-Pro-|- bonds to release unblocked, N-terminal dipeptides from substrates including Ala-Pro-|-p-nitroanilide and (sequentially) Tyr-Pro-|-Phe-Pro-|-Gly-Pro-|-Ile.. Functionally, removes N-terminal dipeptides sequentially from polypeptides having unsubstituted N-termini provided that the penultimate residue is proline. In Streptococcus agalactiae serotype Ia (strain ATCC 27591 / A909 / CDC SS700), this protein is Xaa-Pro dipeptidyl-peptidase.